We begin with the raw amino-acid sequence, 354 residues long: Dye-decolorizing peroxidase (354 aa).

Aspartate 165 (proton acceptor) is an active-site residue. Histidine 238 is a heme binding site. Residues 312–335 are targeting peptide; that stretch reads GLFFSPTVDFLDDPPPLPAPGTPA. Residues 324-337 show a composition bias toward pro residues; that stretch reads DPPPLPAPGTPAAP. The disordered stretch occupies residues 324–354; sequence DPPPLPAPGTPAAPPARNGSLSIGSLKGTTR. Residues 342 to 354 show a composition bias toward polar residues; that stretch reads GSLSIGSLKGTTR.

Belongs to the DyP-type peroxidase family. As to quaternary structure, found in a complex with type 1 encapsulin, strongly suggesting it is found in a type 1 encapsulin nanocompartment. Homotetramer, presumably also in the type 1 encapsulin nanocompartment. The cofactor is heme b.

The protein localises to the encapsulin nanocompartment. It is found in the cell membrane. It catalyses the reaction 2 a phenolic donor + H2O2 = 2 a phenolic radical donor + 2 H2O. Cargo protein of a type 1 encapsulin nanocompartment. A heme-dependent peroxidase. This cargo-loaded encapsulin nanocompartment is probably involved in protection against oxidative damage. In Mycolicibacterium paratuberculosis (strain ATCC BAA-968 / K-10) (Mycobacterium paratuberculosis), this protein is Dye-decolorizing peroxidase.